The primary structure comprises 306 residues: tRNA dimethylallyltransferase (306 aa).

An ATP-binding site is contributed by 9–16; that stretch reads GPTAVGKT. Residue 11–16 coordinates substrate; the sequence is TAVGKT. The interaction with substrate tRNA stretch occupies residues 34 to 37; sequence DSRQ.

The protein belongs to the IPP transferase family. In terms of assembly, monomer. Mg(2+) is required as a cofactor.

The enzyme catalyses adenosine(37) in tRNA + dimethylallyl diphosphate = N(6)-dimethylallyladenosine(37) in tRNA + diphosphate. In terms of biological role, catalyzes the transfer of a dimethylallyl group onto the adenine at position 37 in tRNAs that read codons beginning with uridine, leading to the formation of N6-(dimethylallyl)adenosine (i(6)A). This Roseiflexus castenholzii (strain DSM 13941 / HLO8) protein is tRNA dimethylallyltransferase.